Reading from the N-terminus, the 184-residue chain is ATP-dependent 6-phosphofructokinase (184 aa).

Residues 1–184 (GGDGSLTGAN…TRTTVLGHIQ (184 aa)) are N-terminal catalytic PFK domain 1. 2–5 (GDGS) contacts ATP. Asp-3 lines the Mg(2+) pocket. Substrate contacts are provided by residues 48 to 50 (SID), Arg-85, 92 to 94 (MGR), Glu-148, Arg-176, and 182 to 184 (HIQ). Asp-50 functions as the Proton acceptor in the catalytic mechanism.

This sequence belongs to the phosphofructokinase type A (PFKA) family. ATP-dependent PFK group I subfamily. Eukaryotic two domain clade 'E' sub-subfamily. In terms of assembly, homotetramer. It depends on Mg(2+) as a cofactor.

It is found in the cytoplasm. The enzyme catalyses beta-D-fructose 6-phosphate + ATP = beta-D-fructose 1,6-bisphosphate + ADP + H(+). It functions in the pathway carbohydrate degradation; glycolysis; D-glyceraldehyde 3-phosphate and glycerone phosphate from D-glucose: step 3/4. Allosterically activated by ADP, AMP, or fructose 2,6-bisphosphate, and allosterically inhibited by ATP or citrate. In terms of biological role, catalyzes the phosphorylation of D-fructose 6-phosphate to fructose 1,6-bisphosphate by ATP, the first committing step of glycolysis. The sequence is that of ATP-dependent 6-phosphofructokinase (PFK) from Calanus finmarchicus (Calanus tonsus).